The primary structure comprises 229 residues: PKHD-type hydroxylase BBta_3541 (229 aa).

The 103-residue stretch at 78–180 (QIFPPLFNRY…RVASFFWMQS (103 aa)) folds into the Fe2OG dioxygenase domain. His98, Asp100, and His161 together coordinate Fe cation. Arg171 lines the 2-oxoglutarate pocket.

Fe(2+) serves as cofactor. L-ascorbate is required as a cofactor.

The protein is PKHD-type hydroxylase BBta_3541 of Bradyrhizobium sp. (strain BTAi1 / ATCC BAA-1182).